The chain runs to 426 residues: Metacaspase-1B (426 aa).

Gly residues predominate over residues 1–14; sequence MSGYPGAGYNGGGY. The tract at residues 1–111 is disordered; that stretch reads MSGYPGAGYN…QAPPPPPQAP (111 aa). The span at 21–68 shows a compositional bias: low complexity; it reads QYGGYYPPQPAYNAYQQPPPQQQQYMVYHQPSPGPQQHQHWNPQQQTP. Residues H217 and C273 contribute to the active site.

The protein belongs to the peptidase C14B family.

Functionally, involved in cell death (apoptosis). This is Metacaspase-1B (casB) from Neurospora crassa (strain ATCC 24698 / 74-OR23-1A / CBS 708.71 / DSM 1257 / FGSC 987).